The following is a 470-amino-acid chain: Argininosuccinate lyase (470 aa).

The protein belongs to the lyase 1 family. Argininosuccinate lyase subfamily.

It is found in the cytoplasm. It catalyses the reaction 2-(N(omega)-L-arginino)succinate = fumarate + L-arginine. It participates in amino-acid biosynthesis; L-arginine biosynthesis; L-arginine from L-ornithine and carbamoyl phosphate: step 3/3. The polypeptide is Argininosuccinate lyase (Mycobacterium leprae (strain Br4923)).